Consider the following 390-residue polypeptide: NADH-quinone oxidoreductase subunit D (390 aa).

It belongs to the complex I 49 kDa subunit family. NDH-1 is composed of 14 different subunits. Subunits NuoB, C, D, E, F, and G constitute the peripheral sector of the complex.

It is found in the cell inner membrane. The catalysed reaction is a quinone + NADH + 5 H(+)(in) = a quinol + NAD(+) + 4 H(+)(out). NDH-1 shuttles electrons from NADH, via FMN and iron-sulfur (Fe-S) centers, to quinones in the respiratory chain. The immediate electron acceptor for the enzyme in this species is believed to be ubiquinone. Couples the redox reaction to proton translocation (for every two electrons transferred, four hydrogen ions are translocated across the cytoplasmic membrane), and thus conserves the redox energy in a proton gradient. This Geotalea uraniireducens (strain Rf4) (Geobacter uraniireducens) protein is NADH-quinone oxidoreductase subunit D.